A 443-amino-acid polypeptide reads, in one-letter code: dTDP-4-dehydro-6-deoxy-alpha-D-glucopyranose 2,3-dehydratase (443 aa).

Residues tryptophan 35, 118 to 122, serine 157, tryptophan 260, arginine 325, 341 to 343, 346 to 347, and 377 to 380 each bind dTDP-4-dehydro-6-deoxy-alpha-D-glucose; these read TFSNY, QCN, NL, and EGGR.

Belongs to the hexose 2,3-dehydratase family. Homodimer.

The enzyme catalyses dTDP-4-dehydro-6-deoxy-alpha-D-glucose = dTDP-3,4-didehydro-2,6-dideoxy-alpha-D-glucose + H2O. Its pathway is antibiotic biosynthesis; granaticin biosynthesis. Functionally, involved in the biosynthesis of the 2,6-deoxysugar, dTDP-L-rhodinose, attached to the benzoisochromane quinone chromophore to produce the aglycone antibiotics granaticin and granaticin B. Catalyzes the removal of the hydroxyl group at position C-2 of the hexose ring of dTDP-4-dehydro-6-deoxy-alpha-D-glucopyranose, and the oxidation of the hydroxyl group at position C-3 to form a carbonyl functionality. The product of the reaction, dTDP-2,6-dideoxy-D-glycero-hex-2-enos-4-ulose, is a highly unstable diketosugar, which spontaneously forms dTDP-3,4-didehydro-2,6-dideoxy-alpha-D-glucose. The protein is dTDP-4-dehydro-6-deoxy-alpha-D-glucopyranose 2,3-dehydratase of Streptomyces violaceoruber.